Here is a 320-residue protein sequence, read N- to C-terminus: Mycothiol acetyltransferase (320 aa).

2 consecutive N-acetyltransferase domains span residues 16–141 (RQVR…RSLR) and 152–320 (LQIR…AALA). Residue E36 coordinates 1D-myo-inositol 2-(L-cysteinylamino)-2-deoxy-alpha-D-glucopyranoside. Residues 80–82 (LVV) and 88–93 (RRGIAT) contribute to the acetyl-CoA site. Residues E179, K229, and E239 each coordinate 1D-myo-inositol 2-(L-cysteinylamino)-2-deoxy-alpha-D-glucopyranoside. Acetyl-CoA contacts are provided by residues 243–245 (LGV) and 250–256 (QGRGLGR). Y284 contributes to the 1D-myo-inositol 2-(L-cysteinylamino)-2-deoxy-alpha-D-glucopyranoside binding site. 289 to 294 (NIAAVR) contributes to the acetyl-CoA binding site.

The protein belongs to the acetyltransferase family. MshD subfamily. Monomer.

It carries out the reaction 1D-myo-inositol 2-(L-cysteinylamino)-2-deoxy-alpha-D-glucopyranoside + acetyl-CoA = mycothiol + CoA + H(+). In terms of biological role, catalyzes the transfer of acetyl from acetyl-CoA to desacetylmycothiol (Cys-GlcN-Ins) to form mycothiol. The polypeptide is Mycothiol acetyltransferase (Mycobacterium marinum (strain ATCC BAA-535 / M)).